The sequence spans 318 residues: NADH-ubiquinone oxidoreductase chain 1 (318 aa).

The next 8 membrane-spanning stretches (helical) occupy residues 2–22 (FMIN…FLTL), 69–89 (FMFT…WVPL), 102–122 (MLFI…SGWA), 146–166 (LAII…STLT), 171–191 (HLWL…STLA), 231–251 (IIMM…NPLL), 253–273 (EAHT…FLWV), and 294–314 (LPLT…LACI).

The protein belongs to the complex I subunit 1 family. As to quaternary structure, core subunit of respiratory chain NADH dehydrogenase (Complex I) which is composed of 45 different subunits.

The protein localises to the mitochondrion inner membrane. It catalyses the reaction a ubiquinone + NADH + 5 H(+)(in) = a ubiquinol + NAD(+) + 4 H(+)(out). Core subunit of the mitochondrial membrane respiratory chain NADH dehydrogenase (Complex I) which catalyzes electron transfer from NADH through the respiratory chain, using ubiquinone as an electron acceptor. Essential for the catalytic activity and assembly of complex I. This Dugong dugon (Dugong) protein is NADH-ubiquinone oxidoreductase chain 1 (MT-ND1).